The chain runs to 236 residues: Ribonuclease 3 (236 aa).

In terms of domain architecture, RNase III spans 6-140 (FLDFLKQNRI…FIGAVAQDQG (135 aa)). A Mg(2+)-binding site is contributed by Glu46. Asp50 is a catalytic residue. Asp126 and Glu129 together coordinate Mg(2+). Glu129 is a catalytic residue. The DRBM domain maps to 166–231 (DYKTIFQEQA…AKNAILKLDD (66 aa)).

Belongs to the ribonuclease III family. In terms of assembly, homodimer. Mg(2+) is required as a cofactor.

The protein resides in the cytoplasm. It catalyses the reaction Endonucleolytic cleavage to 5'-phosphomonoester.. Digests double-stranded RNA. Involved in the processing of primary rRNA transcript to yield the immediate precursors to the large and small rRNAs (23S and 16S). Processes some mRNAs, and tRNAs when they are encoded in the rRNA operon. Processes pre-crRNA and tracrRNA of type II CRISPR loci if present in the organism. The sequence is that of Ribonuclease 3 from Ureaplasma parvum serovar 3 (strain ATCC 700970).